The chain runs to 376 residues: Erythronate-4-phosphate dehydrogenase (376 aa).

Substrate-binding residues include serine 45 and threonine 67. NAD(+) is bound at residue aspartate 147. Residue arginine 209 is part of the active site. An NAD(+)-binding site is contributed by aspartate 233. The active site involves glutamate 238. Residue histidine 255 is the Proton donor of the active site. Glycine 258 contributes to the NAD(+) binding site. A substrate-binding site is contributed by tyrosine 259.

This sequence belongs to the D-isomer specific 2-hydroxyacid dehydrogenase family. PdxB subfamily. Homodimer.

It localises to the cytoplasm. It carries out the reaction 4-phospho-D-erythronate + NAD(+) = (R)-3-hydroxy-2-oxo-4-phosphooxybutanoate + NADH + H(+). The protein operates within cofactor biosynthesis; pyridoxine 5'-phosphate biosynthesis; pyridoxine 5'-phosphate from D-erythrose 4-phosphate: step 2/5. Catalyzes the oxidation of erythronate-4-phosphate to 3-hydroxy-2-oxo-4-phosphonooxybutanoate. The sequence is that of Erythronate-4-phosphate dehydrogenase from Shewanella sp. (strain MR-4).